An 87-amino-acid polypeptide reads, in one-letter code: MNSKIFAVLLLLGLLSCVLSDQYCPKSSITACKKMNIRNDCCKDDDCTGGSWCCATPCGNFCKYPTDRPGGKRAAGGKSCKTGYVYY.

The signal sequence occupies residues 1 to 20 (MNSKIFAVLLLLGLLSCVLS). The region spanning 21–66 (DQYCPKSSITACKKMNIRNDCCKDDDCTGGSWCCATPCGNFCKYPT) is the WAP domain. Intrachain disulfides connect C24-C54, C32-C58, C41-C53, C42-C80, and C47-C62.

The protein belongs to the venom protein 11 family. 01 (wap-1) subfamily. Contains 5 disulfide bonds. As to expression, expressed by the venom gland.

It localises to the secreted. Functionally, has antibacterial activity. The sequence is that of U15-lycotoxin-Ls1f from Lycosa singoriensis (Wolf spider).